A 144-amino-acid chain; its full sequence is D-aminoacyl-tRNA deacylase (144 aa).

A Gly-cisPro motif, important for rejection of L-amino acids motif is present at residues 136 to 137 (GP).

The protein belongs to the DTD family. Homodimer.

It is found in the cytoplasm. It catalyses the reaction glycyl-tRNA(Ala) + H2O = tRNA(Ala) + glycine + H(+). It carries out the reaction a D-aminoacyl-tRNA + H2O = a tRNA + a D-alpha-amino acid + H(+). Functionally, an aminoacyl-tRNA editing enzyme that deacylates mischarged D-aminoacyl-tRNAs. Also deacylates mischarged glycyl-tRNA(Ala), protecting cells against glycine mischarging by AlaRS. Acts via tRNA-based rather than protein-based catalysis; rejects L-amino acids rather than detecting D-amino acids in the active site. By recycling D-aminoacyl-tRNA to D-amino acids and free tRNA molecules, this enzyme counteracts the toxicity associated with the formation of D-aminoacyl-tRNA entities in vivo and helps enforce protein L-homochirality. The protein is D-aminoacyl-tRNA deacylase of Aliivibrio salmonicida (strain LFI1238) (Vibrio salmonicida (strain LFI1238)).